The primary structure comprises 32 residues: Hyaluronidase-Pk1a (32 aa).

An N-linked (GlcNAc...) asparagine glycan is attached at N23.

This sequence belongs to the glycosyl hydrolase 56 family. Expressed by the venom gland.

Its subcellular location is the secreted. The catalysed reaction is Random hydrolysis of (1-&gt;4)-linkages between N-acetyl-beta-D-glucosamine and D-glucuronate residues in hyaluronate.. Functionally, hydrolyzes high molecular weight hyaluronic acid to produce small oligosaccharides. The protein is Hyaluronidase-Pk1a of Phoneutria keyserlingi (Brazilian wandering spider).